A 186-amino-acid polypeptide reads, in one-letter code: Large ribosomal subunit protein uL5 (186 aa).

Belongs to the universal ribosomal protein uL5 family. As to quaternary structure, part of the 50S ribosomal subunit; contacts the 5S rRNA and probably tRNA. Forms a bridge to the 30S subunit in the 70S ribosome.

In terms of biological role, this is one of the proteins that bind and probably mediate the attachment of the 5S RNA into the large ribosomal subunit, where it forms part of the central protuberance. In the 70S ribosome it contacts protein S13 of the 30S subunit (bridge B1b), connecting the 2 subunits; this bridge is implicated in subunit movement. May contact the P site tRNA; the 5S rRNA and some of its associated proteins might help stabilize positioning of ribosome-bound tRNAs. In Methanopyrus kandleri (strain AV19 / DSM 6324 / JCM 9639 / NBRC 100938), this protein is Large ribosomal subunit protein uL5.